Reading from the N-terminus, the 598-residue chain is Elongation factor 4 (598 aa).

Positions 4–186 constitute a tr-type G domain; that stretch reads SHIRNFAIIA…AIVSRLPAPS (183 aa). GTP-binding positions include 16–21 and 133–136; these read DHGKST and NKID.

The protein belongs to the TRAFAC class translation factor GTPase superfamily. Classic translation factor GTPase family. LepA subfamily.

The protein localises to the cell inner membrane. It carries out the reaction GTP + H2O = GDP + phosphate + H(+). Its function is as follows. Required for accurate and efficient protein synthesis under certain stress conditions. May act as a fidelity factor of the translation reaction, by catalyzing a one-codon backward translocation of tRNAs on improperly translocated ribosomes. Back-translocation proceeds from a post-translocation (POST) complex to a pre-translocation (PRE) complex, thus giving elongation factor G a second chance to translocate the tRNAs correctly. Binds to ribosomes in a GTP-dependent manner. This Ehrlichia chaffeensis (strain ATCC CRL-10679 / Arkansas) protein is Elongation factor 4.